The sequence spans 401 residues: Dual-specificity RNA methyltransferase RlmN (401 aa).

Residue Glu-114 is the Proton acceptor of the active site. Residues 120-365 enclose the Radical SAM core domain; the sequence is DKGRGTLCVS…TIVRRTRGDD (246 aa). Cys-127 and Cys-370 are joined by a disulfide. Positions 134, 138, and 141 each coordinate [4Fe-4S] cluster. Residues 187-188, Ser-219, 241-243, and Asn-327 each bind S-adenosyl-L-methionine; these read GE and SLH. The S-methylcysteine intermediate role is filled by Cys-370.

This sequence belongs to the radical SAM superfamily. RlmN family. It depends on [4Fe-4S] cluster as a cofactor.

It is found in the cytoplasm. The catalysed reaction is adenosine(2503) in 23S rRNA + 2 reduced [2Fe-2S]-[ferredoxin] + 2 S-adenosyl-L-methionine = 2-methyladenosine(2503) in 23S rRNA + 5'-deoxyadenosine + L-methionine + 2 oxidized [2Fe-2S]-[ferredoxin] + S-adenosyl-L-homocysteine. It catalyses the reaction adenosine(37) in tRNA + 2 reduced [2Fe-2S]-[ferredoxin] + 2 S-adenosyl-L-methionine = 2-methyladenosine(37) in tRNA + 5'-deoxyadenosine + L-methionine + 2 oxidized [2Fe-2S]-[ferredoxin] + S-adenosyl-L-homocysteine. Specifically methylates position 2 of adenine 2503 in 23S rRNA and position 2 of adenine 37 in tRNAs. m2A2503 modification seems to play a crucial role in the proofreading step occurring at the peptidyl transferase center and thus would serve to optimize ribosomal fidelity. The polypeptide is Dual-specificity RNA methyltransferase RlmN (Xanthomonas oryzae pv. oryzae (strain MAFF 311018)).